The chain runs to 201 residues: NADH-ubiquinone oxidoreductase chain 6 (201 aa).

5 helical membrane passes run 4 to 24 (LVLF…VISV), 28 to 48 (VFSV…LLLL), 55 to 75 (LLFL…VVMI), 88 to 108 (FYYA…IFII), and 151 to 171 (LFIL…ILTL).

Belongs to the complex I subunit 6 family.

The protein resides in the mitochondrion membrane. The enzyme catalyses a ubiquinone + NADH + 5 H(+)(in) = a ubiquinol + NAD(+) + 4 H(+)(out). Core subunit of the mitochondrial membrane respiratory chain NADH dehydrogenase (Complex I) that is believed to belong to the minimal assembly required for catalysis. Complex I functions in the transfer of electrons from NADH to the respiratory chain. The immediate electron acceptor for the enzyme is believed to be ubiquinone. The protein is NADH-ubiquinone oxidoreductase chain 6 (ND6) of Cyanidium caldarium (Red alga).